Consider the following 438-residue polypeptide: Vasoactive intestinal polypeptide receptor 2 (438 aa).

The N-terminal stretch at Met1–Pro23 is a signal peptide. The Extracellular segment spans residues Glu24–Ile124. 3 disulfides stabilise this stretch: Cys38-Cys61, Cys52-Cys93, and Cys75-Cys109. N-linked (GlcNAc...) asparagine glycosylation is found at Asn58, Asn88, and Asn92. A helical membrane pass occupies residues Leu125 to Leu150. Over Phe151–Arg158 the chain is Cytoplasmic. The chain crosses the membrane as a helical span at residues Asn159–Asp180. The Extracellular segment spans residues Asp181–Lys203. A disulfide bridge connects residues Cys202 and Cys271. A helical membrane pass occupies residues Leu204–His228. Over Thr229 to Arg239 the chain is Cytoplasmic. A helical membrane pass occupies residues Cys240–Ala261. Residues Ala262–Pro280 lie on the Extracellular side of the membrane. A helical transmembrane segment spans residues Trp281 to Arg304. Over Ile305–Arg325 the chain is Cytoplasmic. The helical transmembrane segment at Leu326–Val346 threads the bilayer. The Extracellular portion of the chain corresponds to Phe347–Lys354. A helical transmembrane segment spans residues Tyr355–Leu378. Over Asn379 to Ile438 the chain is Cytoplasmic.

This sequence belongs to the G-protein coupled receptor 2 family. In terms of assembly, interacts with ADCYAP1/PACAP (via N-terminal extracellular domain); activated by PACAP27 and CAPAC38 neuropeptides. Interacts with VIP; the interaction results in VIPR1 activation. Expressed in CD4+ T-cells, but not in CD8+ T-cells. Expressed in the T-cell lines Jurkat, Peer, MOLT-4, HSB, YT and SUP-T1, but not in the T-cell lines HARRIS and HuT 78.

The protein resides in the cell membrane. In terms of biological role, g protein-coupled receptor activated by the neuropeptides vasoactive intestinal peptide (VIP) and pituitary adenylate cyclase-activating polypeptide (ADCYAP1/PACAP). Binds VIP and both PACAP27 and PACAP38 bioactive peptides with the following order of potency PACAP38 = VIP &gt; PACAP27. Ligand binding causes a conformation change that triggers signaling via guanine nucleotide-binding proteins (G proteins) and modulates the activity of downstream effectors. Activates cAMP-dependent pathway. May be coupled to phospholipase C. The polypeptide is Vasoactive intestinal polypeptide receptor 2 (Homo sapiens (Human)).